The primary structure comprises 257 residues: Ubiquinone biosynthesis O-methyltransferase (257 aa).

Residues R43, G77, D98, and M144 each coordinate S-adenosyl-L-methionine.

Belongs to the methyltransferase superfamily. UbiG/COQ3 family.

It catalyses the reaction a 3-demethylubiquinol + S-adenosyl-L-methionine = a ubiquinol + S-adenosyl-L-homocysteine + H(+). It carries out the reaction a 3-(all-trans-polyprenyl)benzene-1,2-diol + S-adenosyl-L-methionine = a 2-methoxy-6-(all-trans-polyprenyl)phenol + S-adenosyl-L-homocysteine + H(+). It participates in cofactor biosynthesis; ubiquinone biosynthesis. O-methyltransferase that catalyzes the 2 O-methylation steps in the ubiquinone biosynthetic pathway. The polypeptide is Ubiquinone biosynthesis O-methyltransferase (Psychrobacter arcticus (strain DSM 17307 / VKM B-2377 / 273-4)).